A 776-amino-acid polypeptide reads, in one-letter code: Angiomotin-like protein 2 (776 aa).

Residues 41 to 88 (GGAGAGGTGSPQASAEILAPEDTQVLQQATRQEPQGQEHQGGESHLAE) form a disordered region. The interval 101-307 (GEELPTYEEA…STQTSSAPSG (207 aa)) is required for interaction with CDH5. Phosphotyrosine is present on Tyr-107. 3 disordered regions span residues 119–142 (AQQAGPRPHVGDRDPRGAPGGHRS), 169–215 (RNGA…QYPH), and 283–309 (GPLGALSPPEVEGPASTQTSSAPSGSA). Residues 177–192 (HMSSSHSFPQLARNQQ) show a composition bias toward polar residues. A compositionally biased stretch (pro residues) spans 196 to 213 (PRGPPAEGPEPRGPPPQY). The required for interaction with CDH1 stretch occupies residues 220–307 (HETATAVTDP…STQTSSAPSG (88 aa)). The span at 297-306 (ASTQTSSAPS) shows a compositional bias: polar residues. Coiled coils occupy residues 314–509 (METL…LELR) and 543–570 (ALRLSEQLREKEEQILALEADMTKWEQK). Glycyl lysine isopeptide (Lys-Gly) (interchain with G-Cter in ubiquitin) cross-links involve residues Lys-347 and Lys-408. Disordered regions lie at residues 591–620 (QRDTTLIRHSPQPSPSSSFNEGLLTGGHRH) and 677–743 (TQGW…LDPD). Positions 678–687 (QGWQSLSSSE) are enriched in polar residues. Phosphoserine is present on residues Ser-756 and Ser-759. Residues 773 to 776 (EILI) carry the PDZ-binding motif.

This sequence belongs to the angiomotin family. As to quaternary structure, part of a complex composed of AMOTL2, MAGI1 and CDH5, within the complex AMOTL2 acts as a scaffold protein for the interaction of MAGI1 with CDH5. The complex is required for coupling actin fibers to cell junctions in endothelial cells. Within the complex AMOTL2 (via its N-terminus) interacts with CDH5. Interacts (via N-terminus) with MAGI1. Interacts (via N-terminus) with ACTB; the interaction facilitates binding of cell junction complexes to actin fibers in endothelial cells. Interacts with CDH1; the interaction may facilitate binding of radial actin fibers to cell junction complexes. Interacts with SRC. Interacts with YAP1; the interaction is required for ubiquitination of AMOTL2 and localization of YAP1 to tight junctions. Interacts with WWP1; the interaction facilitates WWP1 interaction with the Crumbs complex and subsequent WWP1 translocation to the plasma membrane. WPP1 interaction with the Crumbs complex promotes WPP1 monoubiquitination of AMOTL2 which subsequently activates the Hippo signaling pathway. When ubiquitinated interacts with LATS2 (via UBA domain); the interaction promotes LATS2 phosphorylation of YAP1. Interacts (via PPXY motif) with WWTR1/TAZ (via WW domain); the interaction promotes WWTR1/TAZ localization to the cytoplasm and thereby inhibition of its transcriptional properties. Interacts with PHLDB2; interaction may facilitate PHLDB2 localization to the myotube podosome cortex that surrounds the core. Post-translationally, monoubiquitinated at Lys-347 and Lys-408 by Crumbs complex-bound WWP1. De-ubiquitinated at Lys-347 and Lys-408 by USP9X; the interaction may be promoted by cell contact inhibition. Deubiquitination of AMOTL2 negatively regulates Hippo signaling activation. Phosphorylation at Tyr-107 is necessary for efficient binding to SRC and synergistically functioning with SRC to activate the downstream MAPK pathway.

It is found in the recycling endosome. Its subcellular location is the cytoplasm. It localises to the cell projection. The protein localises to the podosome. The protein resides in the cell junction. Its function is as follows. Regulates the translocation of phosphorylated SRC to peripheral cell-matrix adhesion sites. Required for proper architecture of actin filaments. Plays a role in coupling actin fibers to cell junctions in endothelial cells and is therefore required for correct endothelial cell morphology via facilitating transcellular transmission of mechanical force resulting in endothelial cell elongation. Required for the anchoring of radial actin fibers to CDH1 junction complexes at the cell membrane which facilitates organization of radial actin fiber structure and cellular response to contractile forces. This contributes to maintenance of cell area, size, shape, epithelial sheet organization and trophectoderm cell properties that facilitate blastocyst zona hatching. Inhibits the Wnt/beta-catenin signaling pathway, probably by recruiting CTNNB1 to recycling endosomes and hence preventing its translocation to the nucleus. Participates in angiogenesis. Activates the Hippo signaling pathway in response to cell contact inhibition via interaction with and ubiquitination by Crumbs complex-bound WWP1. Ubiquitinated AMOTL2 then interacts with LATS2 which in turn phosphorylates YAP1, excluding it from the nucleus and localizing it to the cytoplasm and tight junctions, therefore ultimately repressing YAP1-driven transcription of target genes. Acts to inhibit WWTR1/TAZ transcriptional coactivator activity via sequestering WWTR1/TAZ in the cytoplasm and at tight junctions. Regulates the size and protein composition of the podosome cortex and core at myofibril neuromuscular junctions. Selectively promotes FGF-induced MAPK activation through SRC. May play a role in the polarity, proliferation and migration of endothelial cells. This Canis lupus familiaris (Dog) protein is Angiomotin-like protein 2.